A 331-amino-acid polypeptide reads, in one-letter code: Flagellar P-ring protein (331 aa).

The first 22 residues, 1–22 (MRKVTIFIIIIVALTGFGSVRI), serve as a signal peptide directing secretion.

Belongs to the FlgI family. The basal body constitutes a major portion of the flagellar organelle and consists of four rings (L,P,S, and M) mounted on a central rod.

Its subcellular location is the periplasm. The protein resides in the bacterial flagellum basal body. Functionally, assembles around the rod to form the L-ring and probably protects the motor/basal body from shearing forces during rotation. The polypeptide is Flagellar P-ring protein (Pseudothermotoga lettingae (strain ATCC BAA-301 / DSM 14385 / NBRC 107922 / TMO) (Thermotoga lettingae)).